The chain runs to 515 residues: MDLVTLAGQLNAGTILPETILIVTLLVVLLADLIQGRQADRWTPYFAIVGLGGAIATMIPLWTQPATISFFGSFISDHLSLFFRGLIALSALGTILMSIRYVEQTGSSLGEFMTILLTATVGGMFIAGAQELVFIFVALETLSIASYLLTGYTKRDSRSNEAALKYLLIGAASSAIFLYGSSLLYGLSGGHTQLPAIAQALSSESLGLVVALVFVIAGISFKISAVPFHQWTPDVYEGAPTPVVAFLSVGSKAAGFALAIRFLTLAFPSVTDQWQLIFTVLAILSMILGNVVALAQTSMKRMLAYSSIGQAGFVMIGFVVGTEAGYASMLFYLLVYLFMNLGAFTCVILFSLRTGTDQISEYAGLYQKDPLLTLGLSLCLLSLGGIPPLAGFFGKIYLFWAGWQAGAYGLVLLGLLTSVISIYYYIRVVKMMVVKEPQEMSEAVRNYPEVSWSSFGLRPLQVGLVMTVIATSLAGILANPLFNLVNTAVWDVPQLANQPTVMEVAYQALSPAGKS.

Helical transmembrane passes span 14–34 (TILP…ADLI), 42–62 (WTPY…IPLW), 79–99 (LSLF…LMSI), 109–128 (LGEF…FIAG), 132–151 (LVFI…LLTG), 167–187 (LLIG…LYGL), 206–226 (LGLV…ISAV), 240–260 (PTPV…ALAI), 274–294 (WQLI…VVAL), 302–322 (MLAY…VVGT), 330–350 (LFYL…VILF), 374–394 (LGLS…GFFG), 396–416 (IYLF…LGLL), and 462–482 (VGLV…NPLF).

The protein belongs to the complex I subunit 2 family. As to quaternary structure, NDH-1 can be composed of about 15 different subunits; different subcomplexes with different compositions have been identified which probably have different functions.

The protein resides in the cellular thylakoid membrane. The catalysed reaction is a plastoquinone + NADH + (n+1) H(+)(in) = a plastoquinol + NAD(+) + n H(+)(out). It catalyses the reaction a plastoquinone + NADPH + (n+1) H(+)(in) = a plastoquinol + NADP(+) + n H(+)(out). In terms of biological role, NDH-1 shuttles electrons from an unknown electron donor, via FMN and iron-sulfur (Fe-S) centers, to quinones in the respiratory and/or the photosynthetic chain. The immediate electron acceptor for the enzyme in this species is believed to be plastoquinone. Couples the redox reaction to proton translocation, and thus conserves the redox energy in a proton gradient. Cyanobacterial NDH-1 also plays a role in inorganic carbon-concentration. This Thermosynechococcus vestitus (strain NIES-2133 / IAM M-273 / BP-1) protein is NAD(P)H-quinone oxidoreductase subunit 2.